The following is a 108-amino-acid chain: Urease subunit beta (108 aa).

The protein belongs to the urease beta subunit family. Heterotrimer of UreA (gamma), UreB (beta) and UreC (alpha) subunits. Three heterotrimers associate to form the active enzyme.

Its subcellular location is the cytoplasm. It carries out the reaction urea + 2 H2O + H(+) = hydrogencarbonate + 2 NH4(+). The protein operates within nitrogen metabolism; urea degradation; CO(2) and NH(3) from urea (urease route): step 1/1. This Nocardia farcinica (strain IFM 10152) protein is Urease subunit beta.